Here is a 116-residue protein sequence, read N- to C-terminus: Classical arabinogalactan protein 25 (116 aa).

The N-terminal stretch at 1-28 is a signal peptide; the sequence is MAFSFLNKLLIIFIFIFISLSSSSPTIS. Residues 40–95 are disordered; the sequence is LLPSPGDALPSDDGSGTIPSSPSPPDPDTNDGSYPDPLAFSPFASPPVSSPSPPPS. Composition is skewed to low complexity over residues 50-59 and 69-82; these read SDDGSGTIPS and NDGSYPDPLAFSPF. The segment covering 83-95 has biased composition (pro residues); the sequence is ASPPVSSPSPPPS. A lipid anchor (GPI-anchor amidated serine) is attached at serine 89. Positions 90–116 are cleaved as a propeptide — removed in mature form; sequence PSPPPSLPSAGVLLISLIISSASFLAL.

This sequence belongs to the classical AGP family. Post-translationally, O-glycosylated on the hydroxyproline residues.

It is found in the cell membrane. Proteoglycan that seems to be implicated in diverse developmental roles such as differentiation, cell-cell recognition, embryogenesis and programmed cell death. This is Classical arabinogalactan protein 25 (AGP25) from Arabidopsis thaliana (Mouse-ear cress).